The following is a 98-amino-acid chain: Integration host factor subunit beta (98 aa).

It belongs to the bacterial histone-like protein family. Heterodimer of an alpha and a beta chain.

Its function is as follows. This protein is one of the two subunits of integration host factor, a specific DNA-binding protein that functions in genetic recombination as well as in transcriptional and translational control. This Teredinibacter turnerae (strain ATCC 39867 / T7901) protein is Integration host factor subunit beta.